A 459-amino-acid chain; its full sequence is Sulfite oxidase (459 aa).

Residues 4 to 83 (YPRYTREEVG…LQQYKVGELS (80 aa)) form the Cytochrome b5 heme-binding domain. The heme b site is built by H40, H65, and H69. A disordered region spans residues 83–115 (SPDEAPAAPDAQDPFAGDPPRHPGLRVNSQKPF). Residues 85–100 (DEAPAAPDAQDPFAGD) are compositionally biased toward low complexity. Positions 86–95 (EAPAAPDAQD) are hinge. Residues 96 to 323 (PFAGDPPRHP…PSRWQQNDYK (228 aa)) form a moco domain region. Mo-molybdopterin-binding positions include 136 to 140 (FTRNH), C185, D244, H283, R288, and 299 to 301 (SVK). The homodimerization stretch occupies residues 324 to 459 (GFSPCVDWDT…RGVLSTAWHR (136 aa)).

As to quaternary structure, homodimer. The cofactor is heme b. Mo-molybdopterin is required as a cofactor.

Its subcellular location is the mitochondrion intermembrane space. The catalysed reaction is sulfite + O2 + H2O = sulfate + H2O2. The protein operates within energy metabolism; sulfur metabolism. Functionally, catalyzes the oxidation of sulfite to sulfate, the terminal reaction in the oxidative degradation of sulfur-containing amino acids. The polypeptide is Sulfite oxidase (SUOX) (Gallus gallus (Chicken)).